Consider the following 464-residue polypeptide: Methylenetetrahydrofolate--tRNA-(uracil-5-)-methyltransferase TrmFO (464 aa).

13–18 provides a ligand contact to FAD; sequence GGGLAG.

This sequence belongs to the MnmG family. TrmFO subfamily. FAD is required as a cofactor.

It localises to the cytoplasm. The enzyme catalyses uridine(54) in tRNA + (6R)-5,10-methylene-5,6,7,8-tetrahydrofolate + NADH + H(+) = 5-methyluridine(54) in tRNA + (6S)-5,6,7,8-tetrahydrofolate + NAD(+). The catalysed reaction is uridine(54) in tRNA + (6R)-5,10-methylene-5,6,7,8-tetrahydrofolate + NADPH + H(+) = 5-methyluridine(54) in tRNA + (6S)-5,6,7,8-tetrahydrofolate + NADP(+). Its function is as follows. Catalyzes the folate-dependent formation of 5-methyl-uridine at position 54 (M-5-U54) in all tRNAs. This Bartonella bacilliformis (strain ATCC 35685 / KC583 / Herrer 020/F12,63) protein is Methylenetetrahydrofolate--tRNA-(uracil-5-)-methyltransferase TrmFO.